Consider the following 141-residue polypeptide: Galactose-6-phosphate isomerase subunit LacA (141 aa).

Belongs to the LacAB/RpiB family. In terms of assembly, heteromultimeric protein consisting of LacA and LacB.

The catalysed reaction is aldehydo-D-galactose 6-phosphate = keto-D-tagatose 6-phosphate. It functions in the pathway carbohydrate metabolism; D-galactose 6-phosphate degradation; D-tagatose 6-phosphate from D-galactose 6-phosphate: step 1/1. The polypeptide is Galactose-6-phosphate isomerase subunit LacA (Streptococcus pneumoniae serotype 2 (strain D39 / NCTC 7466)).